The primary structure comprises 500 residues: Lysine--tRNA ligase (500 aa).

The Mg(2+) site is built by glutamate 410 and glutamate 417.

The protein belongs to the class-II aminoacyl-tRNA synthetase family. In terms of assembly, homodimer. It depends on Mg(2+) as a cofactor.

The protein localises to the cytoplasm. The catalysed reaction is tRNA(Lys) + L-lysine + ATP = L-lysyl-tRNA(Lys) + AMP + diphosphate. This is Lysine--tRNA ligase from Shewanella piezotolerans (strain WP3 / JCM 13877).